A 112-amino-acid polypeptide reads, in one-letter code: Putative RNase TTE0752 (112 aa).

Catalysis depends on residues arginine 74 and histidine 79. The RX(4)HXY motif motif lies at 74 to 81; the sequence is RDKLIHEY. Position 81 is an O-di-AMP-tyrosine (tyrosine 81).

This sequence belongs to the HepT RNase toxin family. As to quaternary structure, homodimer, probably forms a complex with cognate antitoxin TTE0751. Modified by cognate antitoxin TTE0751; probably at least 2 successive AMPylation events occur on Tyr-81.

Probable toxic component of a putative type VII toxin-antitoxin (TA) system, probably an RNase. Probably neutralized by cognate antitoxin TTE0751. Neutralization may be due to AMPylation by TTE0751. The protein is Putative RNase TTE0752 of Caldanaerobacter subterraneus subsp. tengcongensis (strain DSM 15242 / JCM 11007 / NBRC 100824 / MB4) (Thermoanaerobacter tengcongensis).